Here is an 819-residue protein sequence, read N- to C-terminus: DNA topoisomerase 4 subunit A (819 aa).

One can recognise a Topo IIA-type catalytic domain in the interval 30 to 496; sequence LPDIRDGLKP…QIIEIDTASL (467 aa). Tyr-118 serves as the catalytic O-(5'-phospho-DNA)-tyrosine intermediate.

Belongs to the type II topoisomerase GyrA/ParC subunit family. ParC type 2 subfamily. As to quaternary structure, heterotetramer composed of ParC and ParE.

Its subcellular location is the cell membrane. The catalysed reaction is ATP-dependent breakage, passage and rejoining of double-stranded DNA.. Functionally, topoisomerase IV is essential for chromosome segregation. It relaxes supercoiled DNA. Performs the decatenation events required during the replication of a circular DNA molecule. The chain is DNA topoisomerase 4 subunit A from Streptococcus pyogenes serotype M3 (strain SSI-1).